The chain runs to 262 residues: MRFGLNIDHIVTLREVRKTYEPEILEALFIAKNTHKVDLITIHLREDKRHIQNEDVLRLLEISPLPINIECSINAHITDFLCSLKNKPSKVTIVPENRNEVTTEGGLDCSLKGLGETIKAYQNKGIEVSLFIDPLEDALHFAREHQVKQVEFHTGVYANLHNALYSNANNQIHAISALKEKSPKELKEELHNAFLQLRKMSKEAFFMGIMVCAGHGLNYSNVKELLKIPSLRELNIGHSVISKAVLVGLEKAILEMAQLIKR.

Asparagine 6 is a binding site for 3-amino-2-oxopropyl phosphate. Position 8 to 9 (8 to 9) interacts with 1-deoxy-D-xylulose 5-phosphate; the sequence is DH. Arginine 17 lines the 3-amino-2-oxopropyl phosphate pocket. Histidine 43 serves as the catalytic Proton acceptor. Residues arginine 45 and histidine 50 each contribute to the 1-deoxy-D-xylulose 5-phosphate site. Glutamate 70 serves as the catalytic Proton acceptor. Threonine 102 contacts 1-deoxy-D-xylulose 5-phosphate. Residue histidine 215 is the Proton donor of the active site. 3-amino-2-oxopropyl phosphate-binding positions include glycine 216 and 237–238; that span reads GH.

The protein belongs to the PNP synthase family. As to quaternary structure, homooctamer; tetramer of dimers.

The protein resides in the cytoplasm. The catalysed reaction is 3-amino-2-oxopropyl phosphate + 1-deoxy-D-xylulose 5-phosphate = pyridoxine 5'-phosphate + phosphate + 2 H2O + H(+). It functions in the pathway cofactor biosynthesis; pyridoxine 5'-phosphate biosynthesis; pyridoxine 5'-phosphate from D-erythrose 4-phosphate: step 5/5. Its function is as follows. Catalyzes the complicated ring closure reaction between the two acyclic compounds 1-deoxy-D-xylulose-5-phosphate (DXP) and 3-amino-2-oxopropyl phosphate (1-amino-acetone-3-phosphate or AAP) to form pyridoxine 5'-phosphate (PNP) and inorganic phosphate. The chain is Pyridoxine 5'-phosphate synthase from Helicobacter acinonychis (strain Sheeba).